Consider the following 449-residue polypeptide: UDP-N-acetylmuramoylalanine--D-glutamate ligase (449 aa).

Residue 118–124 coordinates ATP; that stretch reads GSNGKTT.

Belongs to the MurCDEF family.

It is found in the cytoplasm. It catalyses the reaction UDP-N-acetyl-alpha-D-muramoyl-L-alanine + D-glutamate + ATP = UDP-N-acetyl-alpha-D-muramoyl-L-alanyl-D-glutamate + ADP + phosphate + H(+). The protein operates within cell wall biogenesis; peptidoglycan biosynthesis. Functionally, cell wall formation. Catalyzes the addition of glutamate to the nucleotide precursor UDP-N-acetylmuramoyl-L-alanine (UMA). This is UDP-N-acetylmuramoylalanine--D-glutamate ligase from Oceanobacillus iheyensis (strain DSM 14371 / CIP 107618 / JCM 11309 / KCTC 3954 / HTE831).